A 780-amino-acid chain; its full sequence is Alpha-xylosidase (780 aa).

Residues Asn-48, Asn-84, Asn-247, and Asn-298 are each glycosylated (N-linked (GlcNAc...) asparagine). Residues Asp-434 and Glu-437 contribute to the active site. Asn-443 is a glycosylation site (N-linked (GlcNAc...) asparagine). Asp-501 serves as the catalytic Proton donor. An N-linked (GlcNAc...) asparagine glycan is attached at Asn-718.

It belongs to the glycosyl hydrolase 31 family.

The protein localises to the secreted. The enzyme catalyses Hydrolysis of terminal, non-reducing alpha-D-xylose residues with release of alpha-D-xylose.. In terms of biological role, catalyzes the liberation of alpha-xylose from the non-reducing terminal glucose of xyloglucan oligosaccharides. This Emericella nidulans (strain FGSC A4 / ATCC 38163 / CBS 112.46 / NRRL 194 / M139) (Aspergillus nidulans) protein is Alpha-xylosidase.